Here is a 237-residue protein sequence, read N- to C-terminus: B3 domain-containing protein Os03g0184500 (237 aa).

Residues 137 to 228 (FVKPMLHSHV…TFKVHIIRAT (92 aa)) constitute a DNA-binding region (TF-B3).

It is found in the nucleus. The polypeptide is B3 domain-containing protein Os03g0184500 (Oryza sativa subsp. japonica (Rice)).